A 208-amino-acid polypeptide reads, in one-letter code: Guanylate kinase (208 aa).

Residues 21–201 enclose the Guanylate kinase-like domain; sequence GRVVVLSGPS…ACAELVSLLV (181 aa). 28 to 35 is an ATP binding site; the sequence is GPSAVGKS.

The protein belongs to the guanylate kinase family.

The protein localises to the cytoplasm. It carries out the reaction GMP + ATP = GDP + ADP. Essential for recycling GMP and indirectly, cGMP. The sequence is that of Guanylate kinase (gmk) from Mycobacterium bovis (strain ATCC BAA-935 / AF2122/97).